Consider the following 490-residue polypeptide: Bifunctional protein HldE (490 aa).

Residues 1–330 form a ribokinase region; the sequence is MDRTNIENFL…EAMAHHALEY (330 aa). Residue 205-208 coordinates ATP; that stretch reads NRKE. Asp275 is an active-site residue. Positions 356–490 are cytidylyltransferase; it reads FTNGCFDLLH…ERILDRYEQG (135 aa).

This sequence in the N-terminal section; belongs to the carbohydrate kinase PfkB family. In the C-terminal section; belongs to the cytidylyltransferase family. Homodimer.

The enzyme catalyses D-glycero-beta-D-manno-heptose 7-phosphate + ATP = D-glycero-beta-D-manno-heptose 1,7-bisphosphate + ADP + H(+). It carries out the reaction D-glycero-beta-D-manno-heptose 1-phosphate + ATP + H(+) = ADP-D-glycero-beta-D-manno-heptose + diphosphate. It functions in the pathway nucleotide-sugar biosynthesis; ADP-L-glycero-beta-D-manno-heptose biosynthesis; ADP-L-glycero-beta-D-manno-heptose from D-glycero-beta-D-manno-heptose 7-phosphate: step 1/4. The protein operates within nucleotide-sugar biosynthesis; ADP-L-glycero-beta-D-manno-heptose biosynthesis; ADP-L-glycero-beta-D-manno-heptose from D-glycero-beta-D-manno-heptose 7-phosphate: step 3/4. Catalyzes the phosphorylation of D-glycero-D-manno-heptose 7-phosphate at the C-1 position to selectively form D-glycero-beta-D-manno-heptose-1,7-bisphosphate. Its function is as follows. Catalyzes the ADP transfer from ATP to D-glycero-beta-D-manno-heptose 1-phosphate, yielding ADP-D-glycero-beta-D-manno-heptose. The chain is Bifunctional protein HldE from Syntrophotalea carbinolica (strain DSM 2380 / NBRC 103641 / GraBd1) (Pelobacter carbinolicus).